Here is a 333-residue protein sequence, read N- to C-terminus: Abequosyltransferase RfbV (333 aa).

It belongs to the glycosyltransferase 2 family.

It catalyses the reaction CDP-alpha-D-abequose + alpha-D-Man-(1-&gt;4)-alpha-L-Rha-(1-&gt;3)-alpha-D-Gal-di-trans,octa-cis-undecaprenyl diphosphate = alpha-D-Abe-(1-&gt;3)-alpha-D-Man-(1-&gt;4)-alpha-L-Rha-(1-&gt;3)-alpha-D-Gal-di-trans,octa-cis-undecaprenyl diphosphate + CDP + H(+). The protein operates within bacterial outer membrane biogenesis; LPS O-antigen biosynthesis. Catalyzes the transfer of CDP-abequose on D-mannosyl-L-rhamnosyl-D-galactose-1-diphospholipid to yield D-abequosyl-D-mannosyl-rhamnosyl-D-galactose-1-diphospholipid. The chain is Abequosyltransferase RfbV (rfbV) from Salmonella typhimurium (strain LT2 / SGSC1412 / ATCC 700720).